A 419-amino-acid polypeptide reads, in one-letter code: MTTQLEQAWELAKQRFAAVGIDVEEALRQLDRLPVSMHCWQGDDVSGFENPEGSLTGGIQAIGNYPGKARNASELRADLEQAMRLIPGPKRLNLHAIYLESDTPVSRDQIKPEHFKNWVEWAKANQLGLDFNPSCFSHPLSADGFTLSHPDDSIRQFWIDHCKASRRVSAYFGEQLGTPSVMNIWIPDGMKDITVDRLAPRQRLLAALDEVISEKLDPAHHIDAVESKLFGIGAESYTVGSNEFYMGYATSRQTALCLDAGHFHPTEVISDKISAAMLYVPQLLLHVSRPVRWDSDHVVLLDDETQAIASEIVRHDLFDRVHIGLDFFDASINRIAAWVIGTRNMKKALLRALLEPTAELRKLEAAGDYTARLALLEEQKSLPWQAVWEMYCQRHDTPAGSEWLESVRAYEKAILSQRG.

Mn(2+)-binding residues include histidine 262, aspartate 294, and aspartate 296.

This sequence belongs to the rhamnose isomerase family. As to quaternary structure, homotetramer. Mn(2+) is required as a cofactor.

The protein localises to the cytoplasm. It catalyses the reaction L-rhamnopyranose = L-rhamnulose. It participates in carbohydrate degradation; L-rhamnose degradation; glycerone phosphate from L-rhamnose: step 1/3. Catalyzes the interconversion of L-rhamnose and L-rhamnulose. This is L-rhamnose isomerase from Shigella sonnei (strain Ss046).